The sequence spans 512 residues: Perphorin-1 (512 aa).

The N-terminal stretch at 1–18 is a signal peptide; the sequence is MMRKALLALCVATAFAVA. 7 N-linked (GlcNAc...) asparagine glycosylation sites follow: asparagine 49, asparagine 96, asparagine 118, asparagine 378, asparagine 381, asparagine 403, and asparagine 476.

The protein localises to the secreted. The protein resides in the extracellular space. It is found in the extracellular matrix. May be involved in conversion of asexual males and females to the sexual pathway. The chain is Perphorin-1 from Volvox carteri (Green alga).